We begin with the raw amino-acid sequence, 1444 residues long: Adhesin P1 (1444 aa).

Residues 1–30 (MHQPKKRLAKKSWAFLTAALTLGVITGVGG) form the signal peptide. 3 disordered regions span residues 231–283 (QSSF…EVER), 845–885 (IPFE…ALPN), and 927–949 (GDSN…TNEG). Residues 240–257 (LQKDSPVKDSSKQGEKLS) show a composition bias toward basic and acidic residues. The span at 258 to 272 (ETTASSMSSGMATST) shows a compositional bias: low complexity. Polar residues-rich tracts occupy residues 851 to 860 (KPSNNSTPFD) and 868 to 878 (VTPSGGSSKPT). Positions 933–946 (FNKDSEQKWDKTET) are enriched in basic and acidic residues. A helical membrane pass occupies residues 1353–1373 (VLPLIVTVPIVVIILSVTLGL). Residues 1419–1444 (NAPKKLKQATPTKPTPKTPPKPPVKQ) form a disordered region. Residues 1431–1444 (KPTPKTPPKPPVKQ) are compositionally biased toward pro residues.

It belongs to the adhesin P1 family.

It is found in the cell membrane. Functionally, the protein is the major adhesin mediating the attachment of this mycoplasma to the ciliated epithelium. This is Adhesin P1 (mgpA) from Mycoplasma genitalium (strain ATCC 33530 / DSM 19775 / NCTC 10195 / G37) (Mycoplasmoides genitalium).